The primary structure comprises 454 residues: L-cysteine desulfhydrase-like protein lolT1 (454 aa).

Lys227 is subject to N6-(pyridoxal phosphate)lysine.

Belongs to the class-V pyridoxal-phosphate-dependent aminotransferase family. Pyridoxal 5'-phosphate is required as a cofactor.

Its pathway is alkaloid biosynthesis. Its function is as follows. L-cysteine desulfhydrase-like protein; part of the gene cluster that mediates the biosynthesis of loline alkaloids, potent insecticidal agents composed of a pyrrolizidine ring system and an uncommon ether bridge linking carbons 2 and 7. Lolines are structurally differentiated by the various modifications of the L-amino group and include norloline, loline, N-methylloline, N-acetylloline, N-acetylnorloline, and N-formylloline. The first committed step is the condensation of O-acetyl-L-homoserine (derived from L-aspartic acid) and L-proline, probably catalyzed by the gamma-type pyridoxal 5'-phosphate(PLP)-dependent enzyme lolC, to give the diamino diacid, NACPP. Ensuing cyclization, decarboxylation, and acetylation steps yield 1-exo-acetamidopyrrolizidine (AcAP). LolO is required for installation of the ether bridge upon the pathway intermediate, 1-exo-acetamidopyrrolizidine (AcAP). In sequential 2-oxoglutarate- and O(2)-consuming steps, lolO removes hydrogens from C2 and C7 of AcAP to form both carbon-oxygen bonds in N-acetylnorloline (NANL), the precursor to all other lolines. The enzymes lolD, lolE, lolF and lolT have also been proposed to be involved in the ether-bridge installation. Further processing of the exocyclic moiety of NANL by fungal N-acetamidase (LolN), methyltransferase (LolM), and cytochrome P450 (LolP) enzymes, with occasional involvement of a plant acetyltransferase, generates the other known lolines. LolN transforms NANL to norlonine which is monomethylated and dimethylated to respectively lonine and N-methyllonine (NML) by lolM. LolP catalyzes hydroxylation of the methyl group in N-methylloline (NML) and further oxygenation to N-formylloline (NFL). A plant acetyltransferase is responsible for the acetylation of loline to form N-acetylloline (NAL). LolA might interact with aspartate kinase to prevent feedback inhibition of its activity by these end products and thereby promote production of L-homoserine from L-aspartate. The sequence is that of L-cysteine desulfhydrase-like protein lolT1 from Epichloe uncinata (Endophyte fungus).